The following is a 55-amino-acid chain: Large ribosomal subunit protein bL33 (55 aa).

The protein belongs to the bacterial ribosomal protein bL33 family.

The chain is Large ribosomal subunit protein bL33 from Pectobacterium carotovorum subsp. carotovorum (strain PC1).